A 486-amino-acid polypeptide reads, in one-letter code: Cobyric acid synthase (486 aa).

The GATase cobBQ-type domain occupies 248–439 (VLRIVVPALP…LHGLFDTPHA (192 aa)). Catalysis depends on cysteine 328, which acts as the Nucleophile. Histidine 431 is an active-site residue.

This sequence belongs to the CobB/CobQ family. CobQ subfamily.

It participates in cofactor biosynthesis; adenosylcobalamin biosynthesis. Functionally, catalyzes amidations at positions B, D, E, and G on adenosylcobyrinic A,C-diamide. NH(2) groups are provided by glutamine, and one molecule of ATP is hydrogenolyzed for each amidation. In Burkholderia mallei (strain ATCC 23344), this protein is Cobyric acid synthase.